The primary structure comprises 1902 residues: Putative surface cell antigen sca1 (1902 aa).

The signal sequence occupies residues 1-28 (MNKLTEQHLLKKSRFLKYSLLASISVGA). 5 disordered regions span residues 140-273 (GIEK…TFVP), 420-485 (QGVF…SRTA), 707-729 (TTTT…YSSS), 858-885 (NRRR…AWGN), and 1470-1548 (KSES…SDGD). Composition is skewed to polar residues over residues 146 to 159 (QSQN…TEQM) and 168 to 197 (TASS…SPEH). Residues 199–212 (TTAPGTPSSTPATP) are compositionally biased toward low complexity. The segment covering 225–238 (LGANTPPNINTNSK) has biased composition (polar residues). Over residues 246–264 (SSSGPQQQAVQSSSQVKSE) the composition is skewed to low complexity. Over residues 423–439 (FNKNKSSGGNARKSSAG) the composition is skewed to polar residues. Residues 445 to 482 (KKQEAQKQLSEIKKQEKAIKTASDKAKEVAASAKKETS) are compositionally biased toward basic and acidic residues. Residues 863–874 (RDGETSKQRTVD) show a composition bias toward basic and acidic residues. The segment covering 1491-1507 (LSSLPALASSNESALAL) has biased composition (low complexity). Residues 1521–1538 (SSEDEESYDSGFEEEEET) show a composition bias toward acidic residues. One can recognise an Autotransporter domain in the interval 1618-1902 (ESHIKRGLWM…QGSVKLKVNL (285 aa)).

It localises to the cell outer membrane. This Rickettsia conorii (strain ATCC VR-613 / Malish 7) protein is Putative surface cell antigen sca1 (sca1).